The sequence spans 238 residues: MLESVSVDLQGNNFTLLVIQTHTTCTSQIQLELTQKIKNSPSFFSNNTPVVINVENINHHDDWFNLYQTISNIGLFIIGVCCCYNKKLKNIITQSGLPILTKGNIIKSHKNTIKTNYTKPTFDDKTNAISKTQTIHTPIRSGQRIYARNRDLIIISNVSSGAEVIADGNIHIYGSVRGRVLAGASGCEQSQIFCTKLSPELISIGGYYWLNDQIPPEFLGKSARFYLQNHTLIIQHIS.

This sequence belongs to the MinC family. As to quaternary structure, interacts with MinD and FtsZ.

Cell division inhibitor that blocks the formation of polar Z ring septums. Rapidly oscillates between the poles of the cell to destabilize FtsZ filaments that have formed before they mature into polar Z rings. Prevents FtsZ polymerization. The sequence is that of Probable septum site-determining protein MinC from Blochmanniella floridana.